The following is a 240-amino-acid chain: Putative N-acetylmannosamine-6-phosphate 2-epimerase (240 aa).

The protein belongs to the NanE family.

It carries out the reaction an N-acyl-D-glucosamine 6-phosphate = an N-acyl-D-mannosamine 6-phosphate. It participates in amino-sugar metabolism; N-acetylneuraminate degradation; D-fructose 6-phosphate from N-acetylneuraminate: step 3/5. Converts N-acetylmannosamine-6-phosphate (ManNAc-6-P) to N-acetylglucosamine-6-phosphate (GlcNAc-6-P). The polypeptide is Putative N-acetylmannosamine-6-phosphate 2-epimerase (Vibrio cholerae serotype O1 (strain ATCC 39315 / El Tor Inaba N16961)).